The sequence spans 138 residues: Altered inheritance of mitochondria protein 11 (138 aa).

2 helical membrane passes run 17–34 and 67–89; these read ARFYGAAAFTLITMRLIS and LTYASAASIGTFSTLIFGFCWAL.

The protein belongs to the AIM11 family.

The protein resides in the membrane. The chain is Altered inheritance of mitochondria protein 11 (AIM11) from Saccharomyces cerevisiae (strain JAY291) (Baker's yeast).